We begin with the raw amino-acid sequence, 121 residues long: MANPKQVFRRNTEWWNHVERSLVTDLLIHGEIKTTLERAKRIKSKAEKMITLGKLNTLASRRQALKYLRLIPSKVANKDSVQYLFDTIAPKYKNRAGGYTRIIKIQNRAGDNAKMALIQLV.

It belongs to the bacterial ribosomal protein bL17 family. As to quaternary structure, part of the 50S ribosomal subunit. Contacts protein L32.

The sequence is that of Large ribosomal subunit protein bL17 from Metamycoplasma arthritidis (strain 158L3-1) (Mycoplasma arthritidis).